The primary structure comprises 307 residues: uncharacterized protein (307 aa).

This is an uncharacterized protein from Sinorhizobium fredii (strain NBRC 101917 / NGR234).